A 217-amino-acid chain; its full sequence is Pyridoxine/pyridoxamine 5'-phosphate oxidase (217 aa).

Residues 13 to 16 and lysine 71 each bind substrate; that span reads RREY. Residues 66-71, 81-82, arginine 87, lysine 88, and glutamine 110 each bind FMN; these read RIVLLK and YT. Residues tyrosine 128, arginine 132, and serine 136 each coordinate substrate. FMN is bound by residues 145–146 and tryptophan 190; that span reads QS. 196–198 is a binding site for substrate; it reads RLH. Arginine 200 provides a ligand contact to FMN.

Belongs to the pyridoxamine 5'-phosphate oxidase family. In terms of assembly, homodimer. Requires FMN as cofactor.

The catalysed reaction is pyridoxamine 5'-phosphate + O2 + H2O = pyridoxal 5'-phosphate + H2O2 + NH4(+). The enzyme catalyses pyridoxine 5'-phosphate + O2 = pyridoxal 5'-phosphate + H2O2. It participates in cofactor metabolism; pyridoxal 5'-phosphate salvage; pyridoxal 5'-phosphate from pyridoxamine 5'-phosphate: step 1/1. The protein operates within cofactor metabolism; pyridoxal 5'-phosphate salvage; pyridoxal 5'-phosphate from pyridoxine 5'-phosphate: step 1/1. Catalyzes the oxidation of either pyridoxine 5'-phosphate (PNP) or pyridoxamine 5'-phosphate (PMP) into pyridoxal 5'-phosphate (PLP). The chain is Pyridoxine/pyridoxamine 5'-phosphate oxidase from Proteus mirabilis (strain HI4320).